Here is a 580-residue protein sequence, read N- to C-terminus: Probable glucomannan 4-beta-mannosyltransferase 2 (580 aa).

Polar residues predominate over residues 1–12 (MSTNGGAPSQKR). Positions 1 to 33 (MSTNGGAPSQKRSWLPSRPLLTTTTQTYPPPLL) are disordered. Positions 15 to 27 (LPSRPLLTTTTQT) are enriched in low complexity. Residues 85–105 (AVWACLAMSAMLVAEAAWMGL) traverse the membrane as a helical segment. Asp-182 is an active-site residue. The substrate site is built by Asp-241 and Asp-243. Asp-335 is an active-site residue. The next 4 membrane-spanning stretches (helical) occupy residues 414–434 (AIAPILTFLFYCIVIPLSAMV), 437–457 (VTIPVWGLVYIPTAITIMNAI), 528–548 (IYIPELLLALYLLICASYDFV), and 554–574 (YYIYIYLQAVAFTVMGFGFVG).

It belongs to the glycosyltransferase 2 family. Plant cellulose synthase-like A subfamily.

The protein localises to the golgi apparatus membrane. It carries out the reaction GDP-mannose + (glucomannan)n = GDP + (glucomannan)n+1.. Its function is as follows. Probable mannan synthase which consists of a 4-beta-mannosyltransferase activity on mannan using GDP-mannose. The beta-1,4-mannan product is the backbone for galactomannan synthesis by galactomannan galactosyltransferase. Galactomannan is a noncellulosic polysaccharides of plant cell wall. This Oryza sativa subsp. japonica (Rice) protein is Probable glucomannan 4-beta-mannosyltransferase 2.